The following is a 604-amino-acid chain: 3-hydroxy-3-methylglutaryl-coenzyme A reductase 2 (604 aa).

2 helical membrane-spanning segments follow: residues 47 to 67 (LPLY…MYFL) and 91 to 111 (AIVS…IGFV). Residues 112–188 (QTFVARGNND…APLVTPAASE (77 aa)) are linker. N120 carries an N-linked (GlcNAc...) asparagine glycan. Residues 189-604 (EDEEIIKSVV…STKDVTKASS (416 aa)) form a catalytic region. E283 functions as the Charge relay system in the catalytic mechanism. The N-linked (GlcNAc...) asparagine glycan is linked to N347. K415 (charge relay system) is an active-site residue. N460 is a glycosylation site (N-linked (GlcNAc...) asparagine). D491 (charge relay system) is an active-site residue. H589 serves as the catalytic Proton donor. N-linked (GlcNAc...) asparagine glycosylation is present at N593.

This sequence belongs to the HMG-CoA reductase family.

Its subcellular location is the endoplasmic reticulum membrane. The enzyme catalyses (R)-mevalonate + 2 NADP(+) + CoA = (3S)-3-hydroxy-3-methylglutaryl-CoA + 2 NADPH + 2 H(+). The protein operates within metabolic intermediate biosynthesis; (R)-mevalonate biosynthesis; (R)-mevalonate from acetyl-CoA: step 3/3. Its function is as follows. Catalyzes the synthesis of mevalonate. The specific precursor of all isoprenoid compounds present in plants. This Capsicum annuum (Capsicum pepper) protein is 3-hydroxy-3-methylglutaryl-coenzyme A reductase 2 (HMGR2).